The chain runs to 367 residues: MNLADKVLAVNNDLPIRTDSPVHSGKVRSVYWLTATDSKRLIEEKGYDVPSDTSLAIMVISDRISAFDCIWSGENDMRGVPGKGAALNAISNHWFKMFKEQGLADSHILDIPHPFVWIVQKAKPVMIEAICRQYITGSMWRSYTKGERDFCGIELPEGLAKDSKLTSLLQTPSTKGILEGIPGVPAVDDVNITRKNIEDNFEAFNFKSVDDIARYEKLLTEGFDVISTALSKIDQVFVDTKFEFGYVKDVNGDDKLIYMDEVGTPDSSRIWDGEQYRAGKVVENSKEGFRQLLLNHFPDADILLNKDRMSEREALARDNKLPLSVLMDVSKTYTDIAEKITGNKIVLSDNPKAEIIAILREQYQLID.

It belongs to the SAICAR synthetase family.

The catalysed reaction is 5-amino-1-(5-phospho-D-ribosyl)imidazole-4-carboxylate + L-aspartate + ATP = (2S)-2-[5-amino-1-(5-phospho-beta-D-ribosyl)imidazole-4-carboxamido]succinate + ADP + phosphate + 2 H(+). It participates in purine metabolism; IMP biosynthesis via de novo pathway; 5-amino-1-(5-phospho-D-ribosyl)imidazole-4-carboxamide from 5-amino-1-(5-phospho-D-ribosyl)imidazole-4-carboxylate: step 1/2. This Colwellia psychrerythraea (strain 34H / ATCC BAA-681) (Vibrio psychroerythus) protein is Phosphoribosylaminoimidazole-succinocarboxamide synthase.